The following is a 262-amino-acid chain: MIHETAKIHPAAVVEEGAKIGANVTVGPFTYITSTVEIGEGTEVMSHVVIKGHTKIGKDNRIFPHAVIGEENQDKKYGGEDTTVVIGDRNVIREAVQVHRGTVQDKATTVIGDDNLLCVNAHIAHDVVVGNHTHIGNNAILGGHVTVDDHAGVMALSAIHPFCTVGAYAYVGGCSAVVQDVPAYVLAQGNHATPFGLNLVGLKRNGFEKPEIRALQKAYKEIYRSGKTLEEVKPILAEMAQEWPAVKRFSDILETTERGIIR.

The protein belongs to the transferase hexapeptide repeat family. LpxA subfamily. Homotrimer.

The protein resides in the cytoplasm. The catalysed reaction is a (3R)-hydroxyacyl-[ACP] + UDP-N-acetyl-alpha-D-glucosamine = a UDP-3-O-[(3R)-3-hydroxyacyl]-N-acetyl-alpha-D-glucosamine + holo-[ACP]. The protein operates within glycolipid biosynthesis; lipid IV(A) biosynthesis; lipid IV(A) from (3R)-3-hydroxytetradecanoyl-[acyl-carrier-protein] and UDP-N-acetyl-alpha-D-glucosamine: step 1/6. Functionally, involved in the biosynthesis of lipid A, a phosphorylated glycolipid that anchors the lipopolysaccharide to the outer membrane of the cell. This chain is Acyl-[acyl-carrier-protein]--UDP-N-acetylglucosamine O-acyltransferase, found in Vibrio campbellii (strain ATCC BAA-1116).